Reading from the N-terminus, the 571-residue chain is MSFKMTQSQYTSLYGPTIGDAIRLGDTNLFATIEKDFANYGDEATFGGGKSVRDGMAQNPNVTRDDRYVADTVITNAVIIDYDKVYKADLGIKNGYIMKYGKAGNPDIMDDVDIIIGASTDIISGEGKIVTAGGIDTHVHFINPEQAYVALESGVTTHIGGGTGASEGAKATTVAPGPWHIHRMLEAAEGLPINVGFTGKGQAHNHTALIEQIHAGAIGLKVHEDWGATPSALSHALDVADDYDVQIALHADTLNEAGFMEDTMKAIKDRVIHMYHTEGAGGGHAPDLIKSASYPNVLPSSTNPTLPYTVNTIDEHLDMVMITHHLNASIPEDIAFADSRIRKETIAAEDVLQDMGVFSMVSSDSQAMDRVGEVITRTWQVAHRMKEQRGYLDGDKEYNDNNRIKRYIAKYTINPAITHGISEYVGSIEEGKLADLVIWDPAFFGVKPEMILKAGMINTAVNGDANGSIPTSEPLKYRKMYGQYGGNLTGTSITFVSNIAYMNDIERQLSLHRMVRPVKGIRQLTKKDMKNNSETPKLDVDPQTYEVFVDGKLITSEPAKELPLAQRYFLF.

One can recognise a Urease domain in the interval 133-571 (GGIDTHVHFI…LPLAQRYFLF (439 aa)). Residues histidine 138, histidine 140, and lysine 221 each coordinate Ni(2+). Lysine 221 carries the N6-carboxylysine modification. Residue histidine 223 participates in substrate binding. Residues histidine 250 and histidine 276 each coordinate Ni(2+). The active-site Proton donor is histidine 324. Residue aspartate 364 coordinates Ni(2+).

It belongs to the metallo-dependent hydrolases superfamily. Urease alpha subunit family. Heterotrimer of UreA (gamma), UreB (beta) and UreC (alpha) subunits. Three heterotrimers associate to form the active enzyme. Requires Ni cation as cofactor. Post-translationally, carboxylation allows a single lysine to coordinate two nickel ions.

The protein localises to the cytoplasm. It carries out the reaction urea + 2 H2O + H(+) = hydrogencarbonate + 2 NH4(+). It functions in the pathway nitrogen metabolism; urea degradation; CO(2) and NH(3) from urea (urease route): step 1/1. This chain is Urease subunit alpha, found in Staphylococcus carnosus (strain TM300).